The following is a 169-amino-acid chain: HTH-type transcriptional regulator PchR (169 aa).

The HTH marR-type domain maps to 10–153 (YDIYVRLLHL…VLKFLEQLTS (144 aa)). The H-T-H motif DNA-binding region spans 64–87 (NAGIARKMNLSKANVTKISTKLIK).

In terms of assembly, homodimer.

Functionally, represses the expression of the yvmC-cypX operon, which is involved in pulcherriminic acid biosynthesis. Also negatively regulates yvmA, yvnB and its own expression. Positively regulates yisI expression. Acts by binding specifically to a 14-bp palindromic motif, the YvmB box, which is present in the promoter region of the target genes. The sequence is that of HTH-type transcriptional regulator PchR from Bacillus subtilis (strain 168).